The primary structure comprises 181 residues: Large ribosomal subunit protein uL5 (181 aa).

This sequence belongs to the universal ribosomal protein uL5 family. As to quaternary structure, part of the 50S ribosomal subunit; part of the 5S rRNA/L5/L18/L25 subcomplex. Contacts the 5S rRNA and the P site tRNA. Forms a bridge to the 30S subunit in the 70S ribosome.

This is one of the proteins that bind and probably mediate the attachment of the 5S RNA into the large ribosomal subunit, where it forms part of the central protuberance. In the 70S ribosome it contacts protein S13 of the 30S subunit (bridge B1b), connecting the 2 subunits; this bridge is implicated in subunit movement. Contacts the P site tRNA; the 5S rRNA and some of its associated proteins might help stabilize positioning of ribosome-bound tRNAs. In Thermosipho africanus (strain TCF52B), this protein is Large ribosomal subunit protein uL5.